Reading from the N-terminus, the 363-residue chain is MRVVLKLGTSVLTAGTDRLHRPRLVDLMRDIAAVSAQGHEVVLVSSGAVTAGWEALGFPPRERTLAEKQLLAAVGQVQLMHLYTSLAELYGLRSAQLLLTADDFRERTRYLNARTTLEGCLSRGVLPVINENDTVAVEQIKVGDNDTLSAFVANLVEADLLLILTDAPGLYTADPRTHPDATLIPVVERVTPDIWALAGGAGSHRGTGGMHTKIQAAEIATRAGTPVVIAPGDLPEALRRVVDGEALGTRFLAHGTRLEARKRWILAEIAHGRLLLDGGAAQAVRERGSSLLPAGIRQVEGDFERGHTVRLLAPDGQELGRGLTRYRADDLRRVCGHHSREIEALLGYTYGEEAVHRDDLVLL.

Residue K6 participates in ATP binding. Residues S46, D133, and N145 each contribute to the substrate site. ATP is bound by residues 165 to 166 and 207 to 213; these read TD and TGGMHTK. Residues 271–349 form the PUA domain; it reads HGRLLLDGGA…REIEALLGYT (79 aa).

This sequence belongs to the glutamate 5-kinase family.

The protein localises to the cytoplasm. The enzyme catalyses L-glutamate + ATP = L-glutamyl 5-phosphate + ADP. Its pathway is amino-acid biosynthesis; L-proline biosynthesis; L-glutamate 5-semialdehyde from L-glutamate: step 1/2. Catalyzes the transfer of a phosphate group to glutamate to form L-glutamate 5-phosphate. The polypeptide is Glutamate 5-kinase (Deinococcus radiodurans (strain ATCC 13939 / DSM 20539 / JCM 16871 / CCUG 27074 / LMG 4051 / NBRC 15346 / NCIMB 9279 / VKM B-1422 / R1)).